The chain runs to 244 residues: uncharacterized protein (244 aa).

The HTH gntR-type domain maps to 12–80 (VALWRQIADR…QGRGTMIERK (69 aa)). The segment at residues 40–59 (ETALAAEFGVNRHTVRSALA) is a DNA-binding region (H-T-H motif).

This is an uncharacterized protein from Rhizobium meliloti (strain 1021) (Ensifer meliloti).